A 663-amino-acid chain; its full sequence is UvrABC system protein B (663 aa).

The segment covering Met-1–Phe-10 has biased composition (basic and acidic residues). A disordered region spans residues Met-1–Pro-23. Positions Asp-31 to Arg-418 constitute a Helicase ATP-binding domain. Position 44–51 (Gly-44–Thr-51) interacts with ATP. The Beta-hairpin signature appears at Tyr-97–Val-120. In terms of domain architecture, Helicase C-terminal spans Gln-435 to Ile-601. One can recognise a UVR domain in the interval Lys-627–Met-662.

Belongs to the UvrB family. In terms of assembly, forms a heterotetramer with UvrA during the search for lesions. Interacts with UvrC in an incision complex.

The protein resides in the cytoplasm. In terms of biological role, the UvrABC repair system catalyzes the recognition and processing of DNA lesions. A damage recognition complex composed of 2 UvrA and 2 UvrB subunits scans DNA for abnormalities. Upon binding of the UvrA(2)B(2) complex to a putative damaged site, the DNA wraps around one UvrB monomer. DNA wrap is dependent on ATP binding by UvrB and probably causes local melting of the DNA helix, facilitating insertion of UvrB beta-hairpin between the DNA strands. Then UvrB probes one DNA strand for the presence of a lesion. If a lesion is found the UvrA subunits dissociate and the UvrB-DNA preincision complex is formed. This complex is subsequently bound by UvrC and the second UvrB is released. If no lesion is found, the DNA wraps around the other UvrB subunit that will check the other stand for damage. This Streptococcus pyogenes serotype M3 (strain ATCC BAA-595 / MGAS315) protein is UvrABC system protein B.